The following is a 36-amino-acid chain: Photosystem I reaction center subunit VIII (36 aa).

The helical transmembrane segment at 9 to 29 (IFVPLVGLVFPAVAMASLFLY) threads the bilayer.

The protein belongs to the PsaI family.

It localises to the plastid. Its subcellular location is the chloroplast thylakoid membrane. Functionally, may help in the organization of the PsaL subunit. This Ostreococcus tauri protein is Photosystem I reaction center subunit VIII.